The following is a 101-amino-acid chain: NAD(P)H-quinone oxidoreductase subunit 4L, chloroplastic (101 aa).

3 helical membrane-spanning segments follow: residues 2–22 (MLEH…YGLI), 32–52 (MCLE…SDFF), and 61–81 (IFSI…SAIV).

This sequence belongs to the complex I subunit 4L family. In terms of assembly, NDH is composed of at least 16 different subunits, 5 of which are encoded in the nucleus.

Its subcellular location is the plastid. The protein resides in the chloroplast thylakoid membrane. It carries out the reaction a plastoquinone + NADH + (n+1) H(+)(in) = a plastoquinol + NAD(+) + n H(+)(out). It catalyses the reaction a plastoquinone + NADPH + (n+1) H(+)(in) = a plastoquinol + NADP(+) + n H(+)(out). In terms of biological role, NDH shuttles electrons from NAD(P)H:plastoquinone, via FMN and iron-sulfur (Fe-S) centers, to quinones in the photosynthetic chain and possibly in a chloroplast respiratory chain. The immediate electron acceptor for the enzyme in this species is believed to be plastoquinone. Couples the redox reaction to proton translocation, and thus conserves the redox energy in a proton gradient. This chain is NAD(P)H-quinone oxidoreductase subunit 4L, chloroplastic, found in Citrus sinensis (Sweet orange).